Here is a 654-residue protein sequence, read N- to C-terminus: Cytochrome B pre-mRNA-processing protein 1 (654 aa).

Its subcellular location is the mitochondrion. Its function is as follows. Responsible for conferring a stable 5'-end on cytochrome b mRNA. The polypeptide is Cytochrome B pre-mRNA-processing protein 1 (CBP1) (Saccharomyces cerevisiae (strain ATCC 204508 / S288c) (Baker's yeast)).